The primary structure comprises 599 residues: Elongation factor 4 (599 aa).

The tr-type G domain occupies 2 to 184; that stretch reads KNIRNFSIIA…RLVRDIPPPE (183 aa). GTP contacts are provided by residues 14–19 and 131–134; these read DHGKST and NKID.

This sequence belongs to the TRAFAC class translation factor GTPase superfamily. Classic translation factor GTPase family. LepA subfamily.

It localises to the cell inner membrane. It catalyses the reaction GTP + H2O = GDP + phosphate + H(+). Required for accurate and efficient protein synthesis under certain stress conditions. May act as a fidelity factor of the translation reaction, by catalyzing a one-codon backward translocation of tRNAs on improperly translocated ribosomes. Back-translocation proceeds from a post-translocation (POST) complex to a pre-translocation (PRE) complex, thus giving elongation factor G a second chance to translocate the tRNAs correctly. Binds to ribosomes in a GTP-dependent manner. In Shigella dysenteriae serotype 1 (strain Sd197), this protein is Elongation factor 4.